The sequence spans 490 residues: Phosphoglucosamine mutase (490 aa).

S139 (phosphoserine intermediate) is an active-site residue. Mg(2+) is bound by residues S139, D279, D281, and D283. A Phosphoserine modification is found at S139.

This sequence belongs to the phosphohexose mutase family. The cofactor is Mg(2+). Post-translationally, activated by phosphorylation.

The enzyme catalyses alpha-D-glucosamine 1-phosphate = D-glucosamine 6-phosphate. Catalyzes the conversion of glucosamine-6-phosphate to glucosamine-1-phosphate. The polypeptide is Phosphoglucosamine mutase (Trichormus variabilis (strain ATCC 29413 / PCC 7937) (Anabaena variabilis)).